We begin with the raw amino-acid sequence, 335 residues long: Mycobacterial beta-ketoacyl-[acyl-carrier-protein] synthase III (335 aa).

Residues Cys122 and His258 contribute to the active site. The ACP-binding stretch occupies residues 259-263 (QANSR). Asn289 is an active-site residue.

This sequence belongs to the thiolase-like superfamily. FabH family. As to quaternary structure, homodimer.

The protein resides in the cytoplasm. It catalyses the reaction malonyl-[ACP] + dodecanoyl-CoA + H(+) = 3-oxotetradecanoyl-[ACP] + CO2 + CoA. Its pathway is lipid metabolism; fatty acid biosynthesis. It functions in the pathway lipid metabolism; mycolic acid biosynthesis. In terms of biological role, catalyzes the condensation reaction of fatty acid synthesis by the addition to an acyl acceptor of two carbons from malonyl-ACP. Catalyzes the first condensation reaction which initiates fatty acid synthesis and may therefore play a role in governing the total rate of fatty acid production. Possesses both acetoacetyl-ACP synthase and acetyl transacylase activities. Its substrate specificity determines the biosynthesis of branched-chain and/or straight-chain of fatty acids. This Mycolicibacterium paratuberculosis (strain ATCC BAA-968 / K-10) (Mycobacterium paratuberculosis) protein is Mycobacterial beta-ketoacyl-[acyl-carrier-protein] synthase III.